A 544-amino-acid polypeptide reads, in one-letter code: Glycoprotein gp100 (544 aa).

An N-terminal signal peptide occupies residues 1–19; the sequence is MKNFILLVFLFLLVSNSLG. At 20–489 the chain is on the extracellular side; sequence KSNKKDDQSP…SGGGGNKKLY (470 aa). N-linked (GlcNAc...) asparagine glycosylation is present at asparagine 80. The span at 84 to 99 shows a compositional bias: polar residues; sequence EPQNNPIPTVSINPDQ. Residues 84–215 are disordered; it reads EPQNNPIPTV…TPTRPSSSVS (132 aa). Composition is skewed to low complexity over residues 126-142, 150-165, and 189-199; these read SKPT…TIPP, PQTT…TPTP, and PKPTKSSKPTK. 8 N-linked (GlcNAc...) asparagine glycosylation sites follow: asparagine 224, asparagine 308, asparagine 332, asparagine 366, asparagine 380, asparagine 410, asparagine 422, and asparagine 478. The interval 444-480 is disordered; it reads KPSTTDDDNNKNNDDGDSEIDSVGKSAVDSSKSNNNS. The helical transmembrane segment at 490-510 threads the bilayer; that stretch reads LLIILPTVLFIIVAALVAIFI. Residues 511-544 lie on the Cytoplasmic side of the membrane; the sequence is KTRVSQNSGSKVNKNNNKKDSINVPFQMLDEITT.

In terms of processing, N- and O-glycosylated.

Its subcellular location is the membrane. The protein is Glycoprotein gp100 (gppA) of Dictyostelium discoideum (Social amoeba).